Reading from the N-terminus, the 105-residue chain is Vacuolar ATPase assembly integral membrane protein VMA21 homolog (105 aa).

The segment at 1–26 (MSTKNKKAAGGNGGAPKQTRQQSHDS) is disordered. At 1–36 (MSTKNKKAAGGNGGAPKQTRQQSHDSQDYSSFKTVL) the chain is on the cytoplasmic side. Residues 37–57 (FYCMLIVFLPVLTFFVLKGFV) traverse the membrane as a helical segment. Over 58–68 (LDQFLNISEVK) the chain is Lumenal. A helical membrane pass occupies residues 69 to 89 (VNIASAVGAVVALHIALGLYI). The Cytoplasmic segment spans residues 90 to 105 (YRAYFGAPGSKGSKTD).

This sequence belongs to the VMA21 family.

Its subcellular location is the endoplasmic reticulum membrane. It localises to the endoplasmic reticulum-Golgi intermediate compartment membrane. The protein localises to the cytoplasmic vesicle. It is found in the COPII-coated vesicle membrane. Its function is as follows. Required for the assembly of the V0 complex of the vacuolar ATPase (V-ATPase) in the endoplasmic reticulum. The chain is Vacuolar ATPase assembly integral membrane protein VMA21 homolog from Drosophila sechellia (Fruit fly).